A 346-amino-acid polypeptide reads, in one-letter code: Secreted frizzled-related protein 4 (346 aa).

A signal peptide spans 1-18; that stretch reads MFLSILVALCLWLHLALG. An FZ domain is found at 19–139; sequence VRGAPCEAVR…VYDRGVCISP (121 aa). Intrachain disulfides connect Cys-24–Cys-85, Cys-32–Cys-78, Cys-69–Cys-108, Cys-97–Cys-136, and Cys-101–Cys-125. Asn-38 and Asn-68 each carry an N-linked (GlcNAc...) asparagine glycan. Residues Asn-116, Asn-194, and Asn-240 are each glycosylated (N-linked (GlcNAc...) asparagine). In terms of domain architecture, NTR spans 178 to 307; that stretch reads CKCKKVKPTL…IQDKKKTAGR (130 aa). Over residues 294 to 303 the composition is skewed to basic and acidic residues; the sequence is QRRTIQDKKK. Residues 294 to 346 form a disordered region; it reads QRRTIQDKKKTAGRTSRSNPPKPKGKPPAPKPASPKKNIKTRSAQKKTNPKKV. Residues 313 to 326 are compositionally biased toward pro residues; it reads PPKPKGKPPAPKPA. Over residues 330–346 the composition is skewed to basic residues; the sequence is KNIKTRSAQKKTNPKKV.

This sequence belongs to the secreted frizzled-related protein (sFRP) family.

It localises to the secreted. Soluble frizzled-related proteins (sFRPS) function as modulators of Wnt signaling through direct interaction with Wnts. They have a role in regulating cell growth and differentiation in specific cell types. SFRP4 plays a role in bone morphogenesis. May also act as a regulator of adult uterine morphology and function. May also increase apoptosis during ovulation possibly through modulation of FZ1/FZ4/WNT4 signaling. Has phosphaturic effects by specifically inhibiting sodium-dependent phosphate uptake. The sequence is that of Secreted frizzled-related protein 4 (SFRP4) from Macaca mulatta (Rhesus macaque).